The sequence spans 207 residues: Probable glutathione S-transferase 5 (207 aa).

Residues 2 to 81 (VSYKLTYFNG…FLAREFKLNG (80 aa)) enclose the GST N-terminal domain. Residues Tyr-8, Trp-39, Lys-43, 51–53 (GQL), and 65–66 (QS) each bind glutathione. The 125-residue stretch at 83-207 (TAWEEAQVNS…WIETRPVTPF (125 aa)) folds into the GST C-terminal domain.

It belongs to the GST superfamily. Sigma family.

The enzyme catalyses RX + glutathione = an S-substituted glutathione + a halide anion + H(+). Its function is as follows. Conjugation of reduced glutathione to a wide number of exogenous and endogenous hydrophobic electrophiles. May play a role in the detoxification of reactive oxygen species produced during pathogenic bacterial infection. The polypeptide is Probable glutathione S-transferase 5 (gst-5) (Caenorhabditis elegans).